We begin with the raw amino-acid sequence, 225 residues long: Small ribosomal subunit protein uS2 (225 aa).

Residues 1-14 (MAEAKPAPEKEAAA) show a composition bias toward basic and acidic residues. A disordered region spans residues 1–33 (MAEAKPAPEKEAAAKTESVPVETEGEGPSVKEG).

Belongs to the universal ribosomal protein uS2 family.

The polypeptide is Small ribosomal subunit protein uS2 (Methanosarcina barkeri (strain Fusaro / DSM 804)).